Reading from the N-terminus, the 323-residue chain is Acetyl-coenzyme A carboxylase carboxyl transferase subunit alpha (323 aa).

The region spanning 39-293 is the CoA carboxyltransferase C-terminal domain; the sequence is RLSKKSQQLT…RRALADSLRQ (255 aa).

It belongs to the AccA family. In terms of assembly, acetyl-CoA carboxylase is a heterohexamer composed of biotin carboxyl carrier protein (AccB), biotin carboxylase (AccC) and two subunits each of ACCase subunit alpha (AccA) and ACCase subunit beta (AccD).

It localises to the cytoplasm. It carries out the reaction N(6)-carboxybiotinyl-L-lysyl-[protein] + acetyl-CoA = N(6)-biotinyl-L-lysyl-[protein] + malonyl-CoA. Its pathway is lipid metabolism; malonyl-CoA biosynthesis; malonyl-CoA from acetyl-CoA: step 1/1. In terms of biological role, component of the acetyl coenzyme A carboxylase (ACC) complex. First, biotin carboxylase catalyzes the carboxylation of biotin on its carrier protein (BCCP) and then the CO(2) group is transferred by the carboxyltransferase to acetyl-CoA to form malonyl-CoA. In Paraburkholderia phymatum (strain DSM 17167 / CIP 108236 / LMG 21445 / STM815) (Burkholderia phymatum), this protein is Acetyl-coenzyme A carboxylase carboxyl transferase subunit alpha.